Reading from the N-terminus, the 343-residue chain is NAC domain-containing protein 4 (343 aa).

Positions 12 to 168 (LPPGFRFHPT…EWVLCRVFKK (157 aa)) constitute an NAC domain. The DNA-binding element occupies 109 to 174 (VGMKKTLVFY…VFKKSLVEVG (66 aa)). Residues 304 to 333 (GGERERLSASQDTGLTSDVNPEISSSSGQK) form a disordered region. Residues 311-332 (SASQDTGLTSDVNPEISSSSGQ) show a composition bias toward polar residues.

As to expression, expressed in roots, tiller buds, stems, leaves, lamina joints and the young husks. Expressed in embryos, coleoptiles, radicles, leaf pulvinus, ligules, panicles, palea and lemma, anthers, and the internode of the peduncles. Expressed in young leaves, root meristems, florescence meristems and young spikelets.

The protein localises to the nucleus. Functionally, transcription factor involved in the regulation of tiller bud outgrowth, but does not seem to regulate tiller bud initiation. Possesses transactivation activity in yeast. Involved in the regulation of plant architecture and grain yield. Acts as a negative regulator of plant height and flowering time. Regulates directly key genes of the gibberellin (GA) pathway by binding to their promoters. Positively regulates leaf senescence in an age-dependent manner. Activates directly the expression of the chlorophyll degradation genes SGR and NYC3. Positively regulates the level of abscisic acid (ABA) by directly up-regulating the expression of the ABA biosynthetic genes NCED3 and ZEP, and down-regulating the ABA catabolic gene CYP707A5/ABA8OX1. Promotes salt-induced cell death accompanied by the loss of plasma membrane integrity, nuclear DNA fragmentation, and changes of caspase-like activity. Targets genes that encoded a reactive oxygen species (ROS) scavenger COX11 and a caspase-like protease AP37. Activates the potassium efflux channels GORK and SKOR. Acts as a positive regulator of drought and salt tolerance through ABA-mediated pathways. Acts as a negative regulator of root growth. Functions as an upstream integrator of auxin and cytokinin signals that affect CROWN ROOTLESS (CRL) and cyclin-dependent protein kinase (CDK) genes to regulate cell division during root development. Binds directly to the promoters of the auxin inactivation-related genes GH3.6 and GH3.8, the auxin signaling-related gene ARF25, and the cytokinin oxidase gene CKX4. Activates directly the expressions of the 1-aminocyclopropane-1-carboxylate oxidase genes ACO1 and ACO3, enhancing ethylene synthesis, and then retarding seedling establishment. The chain is NAC domain-containing protein 4 from Oryza sativa subsp. japonica (Rice).